Reading from the N-terminus, the 63-residue chain is DNA-directed RNA polymerase 7 kDa subunit (63 aa).

This sequence belongs to the poxviridae DNA-directed RNA polymerase 7 kDa subunit family. As to quaternary structure, the DNA-dependent RNA polymerase used for intermediate and late genes expression consists of eight subunits 147 kDa, 133 kDa, 35 kDa, 30 kDa, 22 kDa, 19 kDa, 18 kDa and 7 kDa totalling more than 500 kDa in mass. The same holoenzyme, with the addition of the transcription-specificity factor RAP94, is used for early gene expression.

Its subcellular location is the virion. The enzyme catalyses RNA(n) + a ribonucleoside 5'-triphosphate = RNA(n+1) + diphosphate. Part of the DNA-dependent RNA polymerase which catalyzes the transcription of viral DNA into RNA using the four ribonucleoside triphosphates as substrates. Responsible for the transcription of early, intermediate and late genes. DNA-dependent RNA polymerase associates with the early transcription factor (ETF) thereby allowing the early genes transcription. Late transcription, and probably also intermediate transcription, require newly synthesized RNA polymerase. The chain is DNA-directed RNA polymerase 7 kDa subunit (RPO7) from Rabbit fibroma virus (strain Kasza) (RFV).